Reading from the N-terminus, the 377-residue chain is tRNA-specific 2-thiouridylase MnmA (377 aa).

Residues G12 to S19 and M38 contribute to the ATP site. The tract at residues N98–D100 is interaction with target base in tRNA. C103 functions as the Nucleophile in the catalytic mechanism. Residues C103 and C200 are joined by a disulfide bond. G127 serves as a coordination point for ATP. An interaction with tRNA region spans residues K150 to Q152. Catalysis depends on C200, which acts as the Cysteine persulfide intermediate. The segment at R314–Y315 is interaction with tRNA.

The protein belongs to the MnmA/TRMU family.

It is found in the cytoplasm. It catalyses the reaction S-sulfanyl-L-cysteinyl-[protein] + uridine(34) in tRNA + AH2 + ATP = 2-thiouridine(34) in tRNA + L-cysteinyl-[protein] + A + AMP + diphosphate + H(+). Functionally, catalyzes the 2-thiolation of uridine at the wobble position (U34) of tRNA, leading to the formation of s(2)U34. This Limosilactobacillus fermentum (strain NBRC 3956 / LMG 18251) (Lactobacillus fermentum) protein is tRNA-specific 2-thiouridylase MnmA.